Here is a 116-residue protein sequence, read N- to C-terminus: Large ribosomal subunit protein bL17 (116 aa).

This sequence belongs to the bacterial ribosomal protein bL17 family. Part of the 50S ribosomal subunit. Contacts protein L32.

This chain is Large ribosomal subunit protein bL17, found in Prochlorococcus marinus (strain MIT 9515).